A 404-amino-acid chain; its full sequence is Cysteine desulfurase IscS (404 aa).

Pyridoxal 5'-phosphate contacts are provided by residues 75–76, asparagine 155, glutamine 183, and 203–205; these read AT and SSH. N6-(pyridoxal phosphate)lysine is present on lysine 206. Threonine 243 is a binding site for pyridoxal 5'-phosphate. Cysteine 328 functions as the Cysteine persulfide intermediate in the catalytic mechanism. Cysteine 328 lines the [2Fe-2S] cluster pocket.

This sequence belongs to the class-V pyridoxal-phosphate-dependent aminotransferase family. NifS/IscS subfamily. Homodimer. Forms a heterotetramer with IscU, interacts with other sulfur acceptors. Requires pyridoxal 5'-phosphate as cofactor.

The protein localises to the cytoplasm. The enzyme catalyses (sulfur carrier)-H + L-cysteine = (sulfur carrier)-SH + L-alanine. It functions in the pathway cofactor biosynthesis; iron-sulfur cluster biosynthesis. Functionally, master enzyme that delivers sulfur to a number of partners involved in Fe-S cluster assembly, tRNA modification or cofactor biosynthesis. Catalyzes the removal of elemental sulfur atoms from cysteine to produce alanine. Functions as a sulfur delivery protein for Fe-S cluster synthesis onto IscU, an Fe-S scaffold assembly protein, as well as other S acceptor proteins. This chain is Cysteine desulfurase IscS, found in Pasteurella multocida (strain Pm70).